A 3122-amino-acid chain; its full sequence is DNA polymerase zeta catalytic subunit (3122 aa).

Disordered stretches follow at residues 270–289 (QRRRNRNESSQISQPESQDC), 425–457 (GYQGEKNRMPLPCHSFGESQNPQNSDDEENEPQ), 487–509 (LCRNAHRSSTEEDDSSSEEEMEW), 524–545 (LDGTADENSDNPLNNENSRAHS), and 842–886 (TSTK…TFEN). The span at 277–286 (ESSQISQPES) shows a compositional bias: polar residues. Positions 497-509 (EEDDSSSEEEMEW) are enriched in acidic residues. Polar residues-rich tracts occupy residues 533 to 545 (DNPLNNENSRAHS) and 842 to 860 (TSTKSTETGATKDSCTHND). The residue at position 1029 (Ser-1029) is a Phosphoserine. 7 disordered regions span residues 1034 to 1075 (YPIY…TLSF), 1154 to 1285 (VYNT…PTGI), 1429 to 1453 (VSVSEQSKTSETCSPGNAASEESQT), 1538 to 1616 (KAQS…LSDD), 1842 to 1869 (NDVLTPTPDSSPRSTSSPLQSKNGSFTP), 1959 to 1979 (NPRPGSPLRNGQAVVNKESSN), and 2091 to 2138 (AAVP…RHSS). Position 1040 is a phosphothreonine (Thr-1040). 2 stretches are compositionally biased toward basic residues: residues 1042–1063 (KKSHRRKSKHKSAKKKPGKQHR) and 1166–1179 (KASRARAQVKKSKA). Residues 1215–1239 (RANEKSLSRKHAIPADEKMKPHSEA) show a composition bias toward basic and acidic residues. Positions 1243 to 1270 (PNHQSVSELTSSSGAQALSKQKEMSQTG) are enriched in polar residues. Residues 1429 to 1440 (VSVSEQSKTSET) show a composition bias toward low complexity. Composition is skewed to polar residues over residues 1441-1453 (CSPGNAASEESQT) and 1538-1561 (KAQSTNVVQDSTSTHQPDKNISVS). The span at 1566-1587 (KANKRTRPVTSPRKPRTPRRTK) shows a compositional bias: basic residues. The span at 1588–1598 (PKEQTPRRLKV) shows a compositional bias: basic and acidic residues. Positions 1602–1615 (NLQTSGHLDNSLSD) are enriched in polar residues. Positions 1844-1895 (VLTPTPDSSPRSTSSPLQSKNGSFTPRTAHILKPLMSPPSREEIVATLLDHD) are mediates interaction with MAD2L2. Positions 1846–1859 (TPTPDSSPRSTSSP) are enriched in low complexity. The segment covering 1860 to 1869 (LQSKNGSFTP) has biased composition (polar residues). At Ser-1964 the chain carries Phosphoserine. Cys-3034, Cys-3037, Cys-3046, and Cys-3049 together coordinate Zn(2+). The CysA-type zinc finger occupies 3034–3049 (CPVCDDLTQHGICSKC). Residues Cys-3078, Cys-3081, Cys-3091, and Cys-3096 each coordinate [4Fe-4S] cluster. The CysB motif signature appears at 3078–3096 (CRNCTGSFDRHIPCVSLNC).

The protein belongs to the DNA polymerase type-B family. As to quaternary structure, heterodimer with MAD2L2. This dimer forms the minimal DNA polymerase zeta complex (Pol-zeta2), with REV3L bearing DNA polymerase catalytic activity, although its activity is very low in this context. Component of the tetrameric Pol-zeta complex (Pol-zeta4), which consists of REV3L, MAD2L2, POLD2 and POLD3; Pol-zeta4 is the fully active form of DNA polymerase zeta. It depends on [4Fe-4S] cluster as a cofactor.

It localises to the nucleus. It carries out the reaction DNA(n) + a 2'-deoxyribonucleoside 5'-triphosphate = DNA(n+1) + diphosphate. Its function is as follows. Catalytic subunit of the DNA polymerase zeta complex, an error-prone polymerase specialized in translesion DNA synthesis (TLS). Lacks an intrinsic 3'-5' exonuclease activity and thus has no proofreading function. The polypeptide is DNA polymerase zeta catalytic subunit (Rev3l) (Mus musculus (Mouse)).